A 248-amino-acid polypeptide reads, in one-letter code: MSYDRAITVFSPDGHLFQVEYAQEAVKKGSTAVGVRGKDIVVLGVEKKSVAKLQDERTVRKICALDDNVCMAFAGLTADARIVINRARVECQSHRLTVEDPVTVEYITRYIASLKQRYTQSNGRRPFGISALIVGFDFDGTPRLYQTDPSGTYHAWKANAIGRGAKSVREFLEKNYTDEAIETDDLTIKLVIKALLEVVQSGGKNIELAVMRRDQPLKILNPEEIEKYVAEIEKEKEENEKKKQKKAS.

Ser-130 carries an O-linked (GlcNAc) serine glycan. A Phosphotyrosine modification is found at Tyr-153. Lys-227 is modified (N6-acetyllysine).

This sequence belongs to the peptidase T1A family. The 26S proteasome consists of a 20S proteasome core and two 19S regulatory subunits. The 20S proteasome core is a barrel-shaped complex made of 28 subunits that are arranged in four stacked rings. The two outer rings are each formed by seven alpha subunits, and the two inner rings are formed by seven beta subunits. The proteolytic activity is exerted by three beta-subunits PSMB5, PSMB6 and PSMB7. PSMA7 interacts directly with the PSMG1-PSMG2 heterodimer which promotes 20S proteasome assembly. Interacts with HIF1A. Interacts with RAB7A. Interacts with PRKN. Interacts with ABL1 and ABL2. Interacts with EMAP2. Interacts with MAVS.

The protein localises to the cytoplasm. It localises to the nucleus. Its function is as follows. Component of the 20S core proteasome complex involved in the proteolytic degradation of most intracellular proteins. This complex plays numerous essential roles within the cell by associating with different regulatory particles. Associated with two 19S regulatory particles, forms the 26S proteasome and thus participates in the ATP-dependent degradation of ubiquitinated proteins. The 26S proteasome plays a key role in the maintenance of protein homeostasis by removing misfolded or damaged proteins that could impair cellular functions, and by removing proteins whose functions are no longer required. Associated with the PA200 or PA28, the 20S proteasome mediates ubiquitin-independent protein degradation. This type of proteolysis is required in several pathways including spermatogenesis (20S-PA200 complex) or generation of a subset of MHC class I-presented antigenic peptides (20S-PA28 complex). Inhibits the transactivation function of HIF-1A under both normoxic and hypoxia-mimicking conditions. The interaction with EMAP2 increases the proteasome-mediated HIF-1A degradation under the hypoxic conditions. Plays a role in hepatitis C virus internal ribosome entry site-mediated translation. Mediates nuclear translocation of the androgen receptor (AR) and thereby enhances androgen-mediated transactivation. Promotes MAVS degradation and thereby negatively regulates MAVS-mediated innate immune response. This chain is Proteasome subunit alpha type-7 (PSMA7), found in Bos taurus (Bovine).